Consider the following 356-residue polypeptide: Zinc finger protein 830 (356 aa).

Residues 11-33 (AQEELRKLMKAKQRESSSKKRIE) adopt a coiled-coil conformation. Residues 47–69 (CVVCNSLIKSELLWPAHILGKQH) form a C2H2-type zinc finger. Residues 71–195 (EKVAELKGTK…PTSSADNLPA (125 aa)) are disordered. Polar residues predominate over residues 80 to 90 (KATTSSPSNTI). 2 stretches are compositionally biased toward basic and acidic residues: residues 99 to 118 (KGSE…EDHP) and 125 to 135 (LPEEFFEKEKT). Acidic residues predominate over residues 150–165 (DYEDVDDDDAEEGEEY). Residues 278 to 322 (AEEDEEGRLDRQIDEIDEQIQCYRRVEHLRDRKDTLQDAKMEVLK) are a coiled coil.

It localises to the nucleus. Its subcellular location is the chromosome. It is found in the nucleus speckle. In terms of biological role, may act as an important regulator of the cell cycle that participates in the maintenance of genome integrity. This Xenopus laevis (African clawed frog) protein is Zinc finger protein 830.